A 376-amino-acid chain; its full sequence is tRNA-specific 2-thiouridylase MnmA (376 aa).

ATP is bound by residues 17-24 (GMSGGVDS) and M43. The interval 103 to 105 (NPD) is interaction with target base in tRNA. C108 (nucleophile) is an active-site residue. Cysteines 108 and 204 form a disulfide. An ATP-binding site is contributed by G132. The interaction with tRNA stretch occupies residues 154-156 (KDQ). C204 (cysteine persulfide intermediate) is an active-site residue. Residues 316–317 (RY) are interaction with tRNA.

The protein belongs to the MnmA/TRMU family.

It localises to the cytoplasm. The enzyme catalyses S-sulfanyl-L-cysteinyl-[protein] + uridine(34) in tRNA + AH2 + ATP = 2-thiouridine(34) in tRNA + L-cysteinyl-[protein] + A + AMP + diphosphate + H(+). In terms of biological role, catalyzes the 2-thiolation of uridine at the wobble position (U34) of tRNA, leading to the formation of s(2)U34. The sequence is that of tRNA-specific 2-thiouridylase MnmA from Pseudomonas syringae pv. syringae (strain B728a).